A 206-amino-acid polypeptide reads, in one-letter code: Small ribosomal subunit protein uS4 (206 aa).

Residues 96 to 156 (GRLDNVVYRM…EKSKKQSRIK (61 aa)) form the S4 RNA-binding domain.

Belongs to the universal ribosomal protein uS4 family. In terms of assembly, part of the 30S ribosomal subunit. Contacts protein S5. The interaction surface between S4 and S5 is involved in control of translational fidelity.

Functionally, one of the primary rRNA binding proteins, it binds directly to 16S rRNA where it nucleates assembly of the body of the 30S subunit. Its function is as follows. With S5 and S12 plays an important role in translational accuracy. The chain is Small ribosomal subunit protein uS4 from Photorhabdus laumondii subsp. laumondii (strain DSM 15139 / CIP 105565 / TT01) (Photorhabdus luminescens subsp. laumondii).